The chain runs to 1136 residues: Pesticidal crystal protein Cry4B protoxin (1136 aa).

Residues threonine 84–leucine 282 form a domain I region. The domain II stretch occupies residues serine 283 to histidine 466. Residues lysine 467–threonine 641 form a domain III region.

It belongs to the delta endotoxin family. As to quaternary structure, in the presence of micelles active toxin forms oligomers that can be fit into cryo-EM maps as trimers. Binds to host (A.gambiae) cadherin AgCad1 (also called BT-R3), probably on the cell surface. Activated toxin may bind its host AgCad1 receptor as a monomer, but also forms an oligomer that is not active. It depends on Mg(2+) as a cofactor. In terms of processing, treatment of recombinant protein with A.aegypti 3rd instar larvae midgut extract for 1 hour yields major bands of 72 and 45 kDa, the combined proteins are toxic to mosquitoes. Longer digestion, which removes the 72 kDa protein, yields a non-toxic preparation. Proteolysis by yields a 65 kDa toxic protein and 48 and 17 kDa fragments which are not toxic. Host (A.gambiae) larval midgut; binds to host brush border membranes, probably to cadherin-AgCad1 (Cad1, also called BT-R3).

Its subcellular location is the spore. Toxic activity on Trichoplusia ni insect cells stably transfected with the AgCad1/BT-R3 receptor leads to oncosis, cell death characterized by cell swelling, membrane blebbing and depletion of energy reserves. Cell death is blocked by EDTA (but not EGTA) and is partially prevented by pretreatment with NF449 (inhibits G-s-alpha-60A and adenylyl cyclase, AC) and 2',5'-dideoxyadenosine 3'-diphosphate (ddADP, inhibits AC), while H-89 and PKAI 14-22 (both inhibit protein kinase A), ouabain (inhibits Na+/K+-ATPase) and a cell exocytosis inhibitor (Exo1) nearly completely prevent the action of the toxin in this system. The cAMP analog pCPT-cAMP and the AC activator FSK enhance toxicity. Functionally, a pesticidal protein active against Aedes and Anopheles mosquito species; activity on Culex species is strain dependent. It remains toxic to permethrin-resistant strains of A.gambiae. Following activation of the protoxin by mosquito larvae midgut extract (or by chymotrypsin or trypsin treatment) it becomes insecticidal. Causes mosquito cell death by activating a host G-protein-coupled receptor which subsequently activates adenylyl cyclase and increases cAMP production. cAMP activates protein kinase A which sets off a series of downstream events which includes increased exocytosis (probably bringing more receptor to the cell membrane), Na+/K+-ATPase activation and eventual host cell death. Another group suggests that alkaline phosphatase serves as the insect receptor and that the protein forms pores in insect cell membranes. This chain is Pesticidal crystal protein Cry4B protoxin, found in Bacillus thuringiensis subsp. israelensis.